Here is a 254-residue protein sequence, read N- to C-terminus: Major prion protein (254 aa).

The signal sequence occupies residues 1–28 (MANLGYWLLALFVTTCTDVGLCKKRPKP). The interaction with ADGRG6 stretch occupies residues 23-38 (KKRPKPGGWNTGGSRY). Positions 23–231 (KKRPKPGGWN…SQAYYDGRRS (209 aa)) are interaction with GRB2, ERI3 and SYN1. A disordered region spans residues 24–107 (KRPKPGGWNT…QWNKPSKPKT (84 aa)). 5 repeat units span residues 51–59 (PQSGGTWGQ), 60–67 (PHGGGWGQ), 68–75 (PHGGGWGQ), 76–83 (PHGGGWGQ), and 84–91 (PHGGGWSQ). The tract at residues 51–91 (PQSGGTWGQPHGGGWGQPHGGGWGQPHGGGWGQPHGGGWSQ) is 5 X 8 AA tandem repeats of P-H-G-G-G-W-G-Q. Residues 55–95 (GTWGQPHGGGWGQPHGGGWGQPHGGGWGQPHGGGWSQGGGT) are compositionally biased toward gly residues. Cu(2+) contacts are provided by histidine 61, glycine 62, glycine 63, histidine 69, glycine 70, glycine 71, histidine 77, glycine 78, glycine 79, histidine 85, glycine 86, and glycine 87. Cysteines 179 and 214 form a disulfide. N-linked (GlcNAc...) asparagine glycosylation is found at asparagine 181 and asparagine 197. A lipid anchor (GPI-anchor amidated serine) is attached at serine 231. Residues 232–254 (SAVLFSSPPVILLISFLIFLIVG) constitute a propeptide, removed in mature form.

It belongs to the prion family. Monomer and homodimer. Has a tendency to aggregate into amyloid fibrils containing a cross-beta spine, formed by a steric zipper of superposed beta-strands. Soluble oligomers may represent an intermediate stage on the path to fibril formation. Copper binding may promote oligomerization. Interacts with GRB2, APP, ERI3/PRNPIP and SYN1. Mislocalized cytosolically exposed PrP interacts with MGRN1; this interaction alters MGRN1 subcellular location and causes lysosomal enlargement. Interacts with APP. Interacts with KIAA1191. Interacts with ADGRG6.

It is found in the cell membrane. It localises to the golgi apparatus. In terms of biological role, its primary physiological function is unclear. May play a role in neuronal development and synaptic plasticity. May be required for neuronal myelin sheath maintenance. May promote myelin homeostasis through acting as an agonist for ADGRG6 receptor. May play a role in iron uptake and iron homeostasis. Soluble oligomers are toxic to cultured neuroblastoma cells and induce apoptosis (in vitro). Association with GPC1 (via its heparan sulfate chains) targets PRNP to lipid rafts. Also provides Cu(2+) or Zn(2+) for the ascorbate-mediated GPC1 deaminase degradation of its heparan sulfate side chains. This is Major prion protein (Prnp) from Rattus norvegicus (Rat).